Reading from the N-terminus, the 403-residue chain is Phosphopentomutase (403 aa).

The Mn(2+) site is built by D13, D298, H303, D339, H340, and H351.

Belongs to the phosphopentomutase family. It depends on Mn(2+) as a cofactor.

It localises to the cytoplasm. The catalysed reaction is 2-deoxy-alpha-D-ribose 1-phosphate = 2-deoxy-D-ribose 5-phosphate. The enzyme catalyses alpha-D-ribose 1-phosphate = D-ribose 5-phosphate. It participates in carbohydrate degradation; 2-deoxy-D-ribose 1-phosphate degradation; D-glyceraldehyde 3-phosphate and acetaldehyde from 2-deoxy-alpha-D-ribose 1-phosphate: step 1/2. In terms of biological role, isomerase that catalyzes the conversion of deoxy-ribose 1-phosphate (dRib-1-P) and ribose 1-phosphate (Rib-1-P) to deoxy-ribose 5-phosphate (dRib-5-P) and ribose 5-phosphate (Rib-5-P), respectively. This is Phosphopentomutase from Streptococcus pneumoniae serotype 19F (strain G54).